We begin with the raw amino-acid sequence, 367 residues long: Alanine racemase (367 aa).

Lys-40 serves as the catalytic Proton acceptor; specific for D-alanine. An N6-(pyridoxal phosphate)lysine modification is found at Lys-40. Position 136 (Arg-136) interacts with substrate. The Proton acceptor; specific for L-alanine role is filled by Tyr-263. A substrate-binding site is contributed by Met-310.

This sequence belongs to the alanine racemase family. Pyridoxal 5'-phosphate is required as a cofactor.

It catalyses the reaction L-alanine = D-alanine. It participates in amino-acid biosynthesis; D-alanine biosynthesis; D-alanine from L-alanine: step 1/1. Functionally, catalyzes the interconversion of L-alanine and D-alanine. May also act on other amino acids. The chain is Alanine racemase (alr) from Streptococcus thermophilus (strain ATCC BAA-491 / LMD-9).